A 311-amino-acid chain; its full sequence is Replication initiation protein (311 aa).

It belongs to the plasmid replication initiation factor family.

This protein is probably a specific topoisomerase involved in initiating replication. This protein is specifically required and may be rate-limiting for replication of the plasmid in vivo. This is Replication initiation protein (repD) from Staphylococcus aureus.